The following is a 450-amino-acid chain: Phosphoglucosamine mutase (450 aa).

Ser101 serves as the catalytic Phosphoserine intermediate. Ser101, Asp240, Asp242, and Asp244 together coordinate Mg(2+). A Phosphoserine modification is found at Ser101.

This sequence belongs to the phosphohexose mutase family. Mg(2+) serves as cofactor. Activated by phosphorylation.

It carries out the reaction alpha-D-glucosamine 1-phosphate = D-glucosamine 6-phosphate. Its function is as follows. Catalyzes the conversion of glucosamine-6-phosphate to glucosamine-1-phosphate. This is Phosphoglucosamine mutase from Streptococcus uberis (strain ATCC BAA-854 / 0140J).